A 117-amino-acid chain; its full sequence is uncharacterized protein (117 aa).

This is an uncharacterized protein from Escherichia coli O6:H1 (strain CFT073 / ATCC 700928 / UPEC).